Reading from the N-terminus, the 116-residue chain is Ribosome-binding factor A (116 aa).

The protein belongs to the RbfA family. As to quaternary structure, monomer. Binds 30S ribosomal subunits, but not 50S ribosomal subunits or 70S ribosomes.

The protein resides in the cytoplasm. Functionally, one of several proteins that assist in the late maturation steps of the functional core of the 30S ribosomal subunit. Associates with free 30S ribosomal subunits (but not with 30S subunits that are part of 70S ribosomes or polysomes). Required for efficient processing of 16S rRNA. May interact with the 5'-terminal helix region of 16S rRNA. This chain is Ribosome-binding factor A, found in Chlorobium phaeobacteroides (strain BS1).